We begin with the raw amino-acid sequence, 414 residues long: Nuclear pore complex-interacting protein family member B7 (414 aa).

The N-terminal stretch at 1–18 (MRLRFWLLIWLLLGFISH) is a signal peptide. Asn-111 is a glycosylation site (N-linked (GlcNAc...) asparagine). Disordered stretches follow at residues 242–262 (RMGR…NSLS) and 335–402 (SPLP…LRTR). The span at 252–262 (QQHSITDNSLS) shows a compositional bias: polar residues. Over residues 356–384 (EVEKPPKPKRWRVDEVEQSPKPKRQREAE) the composition is skewed to basic and acidic residues. Positions 390–402 (KPKRRRLSKLRTR) are enriched in basic residues.

Belongs to the NPIP family.

Its subcellular location is the secreted. This is Nuclear pore complex-interacting protein family member B7 (NPIPB7) from Homo sapiens (Human).